A 313-amino-acid polypeptide reads, in one-letter code: Olfactory receptor 5D18 (313 aa).

The Extracellular portion of the chain corresponds to 1–26 (MLLTDRNTSGTTFTLLGFSDYPELQV). N-linked (GlcNAc...) asparagine glycosylation is present at N7. Residues 27 to 47 (PLFLVFLAIYNVTVLGNIGLI) traverse the membrane as a helical segment. Over 48–55 (VIIKINPK) the chain is Cytoplasmic. A helical membrane pass occupies residues 56–76 (LHTPMYFFLSQLSFVDFCYSS). Topologically, residues 77 to 100 (IIAPKMLVNLVVKDRTISFLGCVV) are extracellular. An intrachain disulfide couples C98 to C190. Residues 101–121 (QFFFFCTFVVTESFLLAVMAY) traverse the membrane as a helical segment. Residues 122–140 (DRFVAICNPLLYTVNMSQK) are Cytoplasmic-facing. Residues 141–161 (LCVLLVVGSYAWGVSCSLELT) form a helical membrane-spanning segment. Topologically, residues 162–197 (CSALKLCFHGFNTINHFFCEFSSLLSLSCSDTYINQ) are extracellular. Residues 198–218 (WLLFFLATFNEISTLLIVLTS) form a helical membrane-spanning segment. Residues 219–238 (YAFIVVTILKMRSVSGRRKA) are Cytoplasmic-facing. Residues 239–259 (FSTCASHLTAITIFHGTILFL) traverse the membrane as a helical segment. Topologically, residues 260–272 (YCVPNSKNSRHTV) are extracellular. A helical membrane pass occupies residues 273 to 293 (KVASVFYTVVIPMLNPLIYSL). The Cytoplasmic segment spans residues 294-313 (RNKDVKDTVTEILDTKVFSY).

Belongs to the G-protein coupled receptor 1 family.

It is found in the cell membrane. Odorant receptor. The chain is Olfactory receptor 5D18 (OR5D18) from Homo sapiens (Human).